We begin with the raw amino-acid sequence, 66 residues long: Large ribosomal subunit protein bL33c (66 aa).

This sequence belongs to the bacterial ribosomal protein bL33 family.

The protein resides in the plastid. Its subcellular location is the chloroplast. The polypeptide is Large ribosomal subunit protein bL33c (Eucalyptus globulus subsp. globulus (Tasmanian blue gum)).